A 332-amino-acid chain; its full sequence is Ketol-acid reductoisomerase (NADP(+)) (332 aa).

The KARI N-terminal Rossmann domain maps to 2-182; that stretch reads AKIYTDKDVS…GATRAGVIET (181 aa). NADP(+)-binding positions include 25–28, S53, and 83–86; these read YGSQ and DMIQ. The active site involves H108. G134 is a binding site for NADP(+). Residues 183-328 enclose the KARI C-terminal knotted domain; it reads TFKEETETDL…RSLRDIILRG (146 aa). Mg(2+)-binding residues include D191, E195, E227, and E231. Residue S252 coordinates substrate.

It belongs to the ketol-acid reductoisomerase family. Requires Mg(2+) as cofactor.

It carries out the reaction (2R)-2,3-dihydroxy-3-methylbutanoate + NADP(+) = (2S)-2-acetolactate + NADPH + H(+). It catalyses the reaction (2R,3R)-2,3-dihydroxy-3-methylpentanoate + NADP(+) = (S)-2-ethyl-2-hydroxy-3-oxobutanoate + NADPH + H(+). Its pathway is amino-acid biosynthesis; L-isoleucine biosynthesis; L-isoleucine from 2-oxobutanoate: step 2/4. It participates in amino-acid biosynthesis; L-valine biosynthesis; L-valine from pyruvate: step 2/4. Functionally, involved in the biosynthesis of branched-chain amino acids (BCAA). Catalyzes an alkyl-migration followed by a ketol-acid reduction of (S)-2-acetolactate (S2AL) to yield (R)-2,3-dihydroxy-isovalerate. In the isomerase reaction, S2AL is rearranged via a Mg-dependent methyl migration to produce 3-hydroxy-3-methyl-2-ketobutyrate (HMKB). In the reductase reaction, this 2-ketoacid undergoes a metal-dependent reduction by NADPH to yield (R)-2,3-dihydroxy-isovalerate. The polypeptide is Ketol-acid reductoisomerase (NADP(+)) (Sulfolobus acidocaldarius (strain ATCC 33909 / DSM 639 / JCM 8929 / NBRC 15157 / NCIMB 11770)).